The primary structure comprises 99 residues: Large ribosomal subunit protein uL23 (99 aa).

It belongs to the universal ribosomal protein uL23 family. In terms of assembly, part of the 50S ribosomal subunit. Contacts protein L29, and trigger factor when it is bound to the ribosome.

Its function is as follows. One of the early assembly proteins it binds 23S rRNA. One of the proteins that surrounds the polypeptide exit tunnel on the outside of the ribosome. Forms the main docking site for trigger factor binding to the ribosome. This is Large ribosomal subunit protein uL23 from Pseudomonas aeruginosa (strain LESB58).